A 299-amino-acid chain; its full sequence is Glutamate formimidoyltransferase (299 aa).

Residue H82 is the For formimidoyltransferase activity of the active site. 163 to 172 (GDRKIHPTAG) contacts folate.

It belongs to the formiminotransferase family.

The protein localises to the cytoplasm. The catalysed reaction is (6S)-5-formyl-5,6,7,8-tetrahydrofolate + L-glutamate = N-formyl-L-glutamate + (6S)-5,6,7,8-tetrahydrofolate + H(+). It catalyses the reaction 5-formimidoyltetrahydrofolate + L-glutamate = N-formimidoyl-L-glutamate + (6S)-5,6,7,8-tetrahydrofolate. The enzyme catalyses (6S)-5-formyl-5,6,7,8-tetrahydrofolate + ATP = (6R)-5,10-methenyltetrahydrofolate + ADP + phosphate. The protein operates within amino-acid degradation; L-histidine degradation into L-glutamate; L-glutamate from N-formimidoyl-L-glutamate (transferase route): step 1/1. It functions in the pathway one-carbon metabolism; tetrahydrofolate interconversion. In terms of biological role, catalyzes the transfer of the formyl group from N-formylglutamate to tetrahydrofolate (THF) to yield 5-formyltetrahydrofolate (5-CHO-THF) and glutamate (Glu). The triglutamate form of 5-CHO-THF (5-CHO-THF-Glu3) can also be used as substrate. It can also catalyze the transfer of the formimino group from N-formiminoglutamate to tetrahydrofolate (THF) to yield 5-formiminotetrahydrofolate (5-NH=CH-THF) and glutamate (Glu). It can replace YgfA to catalyze the irreversible ATP-dependent transformation of 5-CHO-THF to form 5,10-methenyltetrahydrofolate (5,10-CH=THF). In Streptococcus pyogenes serotype M1, this protein is Glutamate formimidoyltransferase.